A 145-amino-acid chain; its full sequence is UPF0179 protein Maeo_1037 (145 aa).

It belongs to the UPF0179 family.

This Methanococcus aeolicus (strain ATCC BAA-1280 / DSM 17508 / OCM 812 / Nankai-3) protein is UPF0179 protein Maeo_1037.